The chain runs to 538 residues: RNA-binding protein RO60 (538 aa).

A TROVE domain is found at 16 to 369; sequence VPNSEGCYVW…SFKLVEPTGK (354 aa). The interval 120 to 284 is RNA-binding; that stretch reads RIPTHLFTFI…DMPLTALLRN (165 aa). A VWFA-like domain region spans residues 361–538; it reads FKLVEPTGKR…VIRNFTLDLI (178 aa). The a divalent metal cation site is built by Ser-378, Ser-380, and Thr-445.

The protein belongs to the Ro 60 kDa family.

Its subcellular location is the cytoplasm. Functionally, RNA-binding protein that binds to misfolded non-coding RNAs, pre-5S rRNA, and several small cytoplasmic RNA molecules known as Y RNAs. May play roles in cilia formation and/or maintenance. The chain is RNA-binding protein RO60 from Xenopus laevis (African clawed frog).